The sequence spans 104 residues: MVTIPPLVSRWFPVCGFRVCKISSPFAFTTPRWPHNDVYIGLPITLLHFPAHFQKFSQPAEISDKRYRVLLCNGHQTPALQQGTHSSRQVTPLSLRSRSSTFNK.

The Nuclear export signal signature appears at 1–35 (MVTIPPLVSRWFPVCGFRVCKISSPFAFTTPRWPH). The segment at 78 to 104 (PALQQGTHSSRQVTPLSLRSRSSTFNK) is disordered.

In terms of assembly, interacts with host RGS16.

The protein resides in the host cytoplasm. Its subcellular location is the host nucleus. Its function is as follows. Plays a role in modulating host cell signaling by binding to and degrading host RGS16. Not necessary for virus replication. The protein is Protein ORF3 of Sus scrofa (Pig).